The primary structure comprises 247 residues: Probable dihydroorotate dehydrogenase B (NAD(+)), electron transfer subunit (247 aa).

The FAD-binding FR-type domain maps to M1–E87. [2Fe-2S] cluster is bound by residues C200, C205, C208, and C216.

It belongs to the PyrK family. Heterotetramer of 2 PyrK and 2 PyrD type B subunits. The cofactor is [2Fe-2S] cluster. FAD serves as cofactor.

The protein operates within pyrimidine metabolism; UMP biosynthesis via de novo pathway; orotate from (S)-dihydroorotate (NAD(+) route): step 1/1. Responsible for channeling the electrons from the oxidation of dihydroorotate from the FMN redox center in the PyrD type B subunit to the ultimate electron acceptor NAD(+). This chain is Probable dihydroorotate dehydrogenase B (NAD(+)), electron transfer subunit, found in Pyrococcus horikoshii (strain ATCC 700860 / DSM 12428 / JCM 9974 / NBRC 100139 / OT-3).